A 474-amino-acid chain; its full sequence is tRNA-2-methylthio-N(6)-dimethylallyladenosine synthase (474 aa).

Residues Lys3–Gly120 form the MTTase N-terminal domain. The [4Fe-4S] cluster site is built by Cys12, Cys49, Cys83, Cys157, Cys161, and Cys164. A Radical SAM core domain is found at Arg143 to Ala375. A TRAM domain is found at Arg378–Arg441.

It belongs to the methylthiotransferase family. MiaB subfamily. Monomer. The cofactor is [4Fe-4S] cluster.

It is found in the cytoplasm. The catalysed reaction is N(6)-dimethylallyladenosine(37) in tRNA + (sulfur carrier)-SH + AH2 + 2 S-adenosyl-L-methionine = 2-methylsulfanyl-N(6)-dimethylallyladenosine(37) in tRNA + (sulfur carrier)-H + 5'-deoxyadenosine + L-methionine + A + S-adenosyl-L-homocysteine + 2 H(+). Its function is as follows. Catalyzes the methylthiolation of N6-(dimethylallyl)adenosine (i(6)A), leading to the formation of 2-methylthio-N6-(dimethylallyl)adenosine (ms(2)i(6)A) at position 37 in tRNAs that read codons beginning with uridine. The polypeptide is tRNA-2-methylthio-N(6)-dimethylallyladenosine synthase (Klebsiella pneumoniae (strain 342)).